A 281-amino-acid polypeptide reads, in one-letter code: Elongation factor Ts (281 aa).

An involved in Mg(2+) ion dislocation from EF-Tu region spans residues 80–83; that stretch reads TDFV.

Belongs to the EF-Ts family.

The protein localises to the cytoplasm. Its function is as follows. Associates with the EF-Tu.GDP complex and induces the exchange of GDP to GTP. It remains bound to the aminoacyl-tRNA.EF-Tu.GTP complex up to the GTP hydrolysis stage on the ribosome. In Vibrio parahaemolyticus serotype O3:K6 (strain RIMD 2210633), this protein is Elongation factor Ts.